The sequence spans 310 residues: Putative S-adenosyl-L-methionine-dependent methyltransferase Mb0151 (310 aa).

S-adenosyl-L-methionine contacts are provided by residues aspartate 132 and 161–162 (DL).

Belongs to the UPF0677 family.

Exhibits S-adenosyl-L-methionine-dependent methyltransferase activity. This chain is Putative S-adenosyl-L-methionine-dependent methyltransferase Mb0151, found in Mycobacterium bovis (strain ATCC BAA-935 / AF2122/97).